We begin with the raw amino-acid sequence, 167 residues long: NAD(P)H-quinone oxidoreductase subunit I, chloroplastic (167 aa).

2 4Fe-4S ferredoxin-type domains span residues Gly-55 to Lys-84 and Leu-95 to Glu-124. [4Fe-4S] cluster is bound by residues Cys-64, Cys-67, Cys-70, Cys-74, Cys-104, Cys-107, Cys-110, and Cys-114.

Belongs to the complex I 23 kDa subunit family. As to quaternary structure, NDH is composed of at least 16 different subunits, 5 of which are encoded in the nucleus. Requires [4Fe-4S] cluster as cofactor.

It localises to the plastid. The protein localises to the chloroplast thylakoid membrane. The catalysed reaction is a plastoquinone + NADH + (n+1) H(+)(in) = a plastoquinol + NAD(+) + n H(+)(out). The enzyme catalyses a plastoquinone + NADPH + (n+1) H(+)(in) = a plastoquinol + NADP(+) + n H(+)(out). Its function is as follows. NDH shuttles electrons from NAD(P)H:plastoquinone, via FMN and iron-sulfur (Fe-S) centers, to quinones in the photosynthetic chain and possibly in a chloroplast respiratory chain. The immediate electron acceptor for the enzyme in this species is believed to be plastoquinone. Couples the redox reaction to proton translocation, and thus conserves the redox energy in a proton gradient. In Barbarea verna (Land cress), this protein is NAD(P)H-quinone oxidoreductase subunit I, chloroplastic.